The primary structure comprises 253 residues: 5'/3'-nucleotidase SurE (253 aa).

A divalent metal cation is bound by residues Asp8, Asp9, Ser39, and Asn92.

Belongs to the SurE nucleotidase family. It depends on a divalent metal cation as a cofactor.

The protein resides in the cytoplasm. The catalysed reaction is a ribonucleoside 5'-phosphate + H2O = a ribonucleoside + phosphate. It catalyses the reaction a ribonucleoside 3'-phosphate + H2O = a ribonucleoside + phosphate. The enzyme catalyses [phosphate](n) + H2O = [phosphate](n-1) + phosphate + H(+). Functionally, nucleotidase with a broad substrate specificity as it can dephosphorylate various ribo- and deoxyribonucleoside 5'-monophosphates and ribonucleoside 3'-monophosphates with highest affinity to 3'-AMP. Also hydrolyzes polyphosphate (exopolyphosphatase activity) with the preference for short-chain-length substrates (P20-25). Might be involved in the regulation of dNTP and NTP pools, and in the turnover of 3'-mononucleotides produced by numerous intracellular RNases (T1, T2, and F) during the degradation of various RNAs. The polypeptide is 5'/3'-nucleotidase SurE (Sodalis glossinidius (strain morsitans)).